Consider the following 822-residue polypeptide: Cadherin-3 (822 aa).

The first 25 residues, 1-25, serve as a signal peptide directing secretion; sequence MELLSGPHAFLLLLLQVCWLRSVVS. Residues 26–99 constitute a propeptide that is removed on maturation; it reads EPYRAGFIGE…PTRILRRRKR (74 aa). Cadherin domains are found at residues 100–207, 208–320, 321–432, 433–538, and 539–645; these read EWVM…KPKF, TQDT…APEF, EPQK…APVF, VPPS…DHGP, and IPEP…RPWK. Topologically, residues 100–647 are extracellular; the sequence is EWVMPPIFVP…NDCPRPWKGG (548 aa). N-linked (GlcNAc...) asparagine glycosylation is present at asparagine 192. Asparagine 558 carries an N-linked (GlcNAc...) asparagine glycan. A helical membrane pass occupies residues 648–670; the sequence is FILPILGAVLALLTLLLALLLLV. The Cytoplasmic portion of the chain corresponds to 671 to 822; sequence RKKRKVKEPL…ADMYGGGEDD (152 aa).

As to quaternary structure, interacts with CDCP1 and CTNNB1.

Its subcellular location is the cell membrane. Cadherins are calcium-dependent cell adhesion proteins. They preferentially interact with themselves in a homophilic manner in connecting cells; cadherins may thus contribute to the sorting of heterogeneous cell types. In Mus musculus (Mouse), this protein is Cadherin-3 (Cdh3).